Here is a 2110-residue protein sequence, read N- to C-terminus: Tenascin (2110 aa).

The signal sequence occupies residues 1-22 (MGAVTWLLPGIFLALFALTPEG). A glycan (N-linked (GlcNAc...) asparagine) is linked at Asn-38. Phosphoserine is present on residues Ser-65, Ser-70, and Ser-72. Positions 69 to 91 (ESASGEKDLTPTPESSGSFQEHT) are disordered. Ser-72 is a glycosylation site (O-linked (Xyl...) (chondroitin sulfate) serine). Positions 80-89 (TPESSGSFQE) are enriched in polar residues. A coiled-coil region spans residues 118-142 (DVKELLSRLEELELLVSSLREQCTM). N-linked (GlcNAc...) asparagine glycosylation is found at Asn-166 and Asn-184. Residues 174–185 (CVCEPGWKGPNC) enclose the EGF-like 1; incomplete domain. EGF-like domains follow at residues 186 to 216 (SEPDCPGNCNLRGQCLDGQCICDEGFTGEDC), 217 to 247 (SQLACPNDCNDQGRCVNGVCVCFEGYAGPDC), 248 to 279 (GLEVCPVPCSEEHGMCVDGRCVCKDGFAGEDC), 280 to 310 (NEPLCLNNCYNRGRCVENECVCDEGFTGEDC), 311 to 341 (SELICPNDCFDRGRCINGTCYCEEGFTGEDC), 342 to 372 (GELTCPNDCQGRGQCEEGQCVCNEGFAGADC), 373 to 403 (SEKRCPADCHHRGRCLNGQCECDDGFTGADC), 404 to 434 (GDLQCPNGCSGHGRCVNGQCVCDEGYTGEDC), 435 to 465 (SQRRCPNDCHNRGLCVQGKCICEQGFKGFDC), 466 to 496 (SEMSCPNDCHQHGRCVNGMCICDDDYTGEDC), 497 to 527 (RDRRCPRDCSQRGRCVDGQCICEDGFTGPDC), 528 to 558 (AELSCPSDCHGHGRCVNGQCICHEGFTGKDC), 559 to 589 (KEQRCPSDCHGQGRCEDGQCICHEGFTGLDC), and 590 to 621 (GQRSCPNDCSNQGQCVSGRCICNEGYTGIDCS). 42 disulfide bridges follow: Cys-190–Cys-200, Cys-194–Cys-205, Cys-207–Cys-216, Cys-221–Cys-231, Cys-225–Cys-236, Cys-238–Cys-247, Cys-252–Cys-263, Cys-256–Cys-268, Cys-270–Cys-279, Cys-284–Cys-294, Cys-288–Cys-299, Cys-301–Cys-310, Cys-315–Cys-325, Cys-319–Cys-330, Cys-332–Cys-341, Cys-346–Cys-356, Cys-350–Cys-361, Cys-363–Cys-372, Cys-377–Cys-387, Cys-381–Cys-392, Cys-394–Cys-403, Cys-408–Cys-418, Cys-412–Cys-423, Cys-425–Cys-434, Cys-439–Cys-449, Cys-443–Cys-454, Cys-456–Cys-465, Cys-470–Cys-480, Cys-474–Cys-485, Cys-487–Cys-496, Cys-501–Cys-511, Cys-505–Cys-516, Cys-518–Cys-527, Cys-532–Cys-542, Cys-536–Cys-547, Cys-549–Cys-558, Cys-563–Cys-573, Cys-567–Cys-578, Cys-580–Cys-589, Cys-594–Cys-604, Cys-598–Cys-609, and Cys-611–Cys-620. Asn-327 carries an N-linked (GlcNAc...) asparagine glycan. Fibronectin type-III domains follow at residues 625–715 (PPKD…LPAP), 716–804 (EGLK…TRLD), 805–894 (APSH…TGLD), 895–988 (APRN…IDAP), 989–1077 (KDLR…VPSL), 1078–1165 (ENLT…TGTT), 1167–1259 (NLGE…LPQL), 1260–1348 (GGLS…AREP), 1349–1440 (EIGN…ALPL), 1442–1530 (ENLT…EAEP), 1531–1620 (EVDN…TAMG), 1621–1710 (SPKE…ALDG), 1711–1797 (PSGL…TDLD), and 1798–1886 (SPRE…IGLL). Asn-788 is a glycosylation site (N-linked (GlcNAc...) asparagine). Thr-905 bears the Phosphothreonine mark. N-linked (GlcNAc...) asparagine glycans are attached at residues Asn-1018, Asn-1079, Asn-1093, Asn-1119, Asn-1184, Asn-1210, Asn-1275, Asn-1301, Asn-1354, Asn-1364, Asn-1394, and Asn-1443. An N-linked (GlcNAc...) asparagine glycan is attached at Asn-1718. Positions 1884–2099 (GLLYPFPRDC…FAEMKLRPSN (216 aa)) constitute a Fibrinogen C-terminal domain. Residues Asn-1969 and Asn-2071 are each glycosylated (N-linked (GlcNAc...) asparagine).

It belongs to the tenascin family. As to quaternary structure, homohexamer; disulfide-linked. A homotrimer may be formed in the triple coiled-coil region and may be stabilized by disulfide rings at both ends. Two of such half-hexabrachions may be disulfide linked within the central globule. Interacts with CSPG4. Interacts (via the 3rd fibronectin type-III domain) with integrin ITGA9:ITGB1. Post-translationally, N-glycosylated. Expressed in the corneal limbus, the periosteum and the rib molecular layer of the cerebellum, the matrix of kidney tubules, blood vessels, stomach and intestine (at protein level). In terms of tissue distribution, weakly expressed in the brain. As to expression, highly expressed in the thymus and moderately expressed in the brain.

It is found in the secreted. It localises to the extracellular space. The protein resides in the extracellular matrix. Functionally, extracellular matrix protein implicated in guidance of migrating neurons as well as axons during development, synaptic plasticity as well as neuronal regeneration. Promotes neurite outgrowth when provided to neurons in culture. May play a role in supporting the growth of epithelial tumors. Ligand for integrins ITGA8:ITGB1, ITGA9:ITGB1, ITGAV:ITGB3 and ITGAV:ITGB6. In tumors, stimulates angiogenesis by elongation, migration and sprouting of endothelial cells. This Mus musculus (Mouse) protein is Tenascin.